Here is a 135-residue protein sequence, read N- to C-terminus: Kappa-casein (135 aa).

O-linked (GalNAc...) threonine glycosylation occurs at T96. S114 is modified (phosphoserine; alternate). S114 is a glycosylation site (O-linked (GalNAc...) serine; alternate). T131 carries O-linked (GalNAc...) threonine glycosylation. Residue S132 is modified to Phosphoserine.

The protein belongs to the kappa-casein family. In terms of tissue distribution, mammary gland specific. Secreted in milk.

The protein localises to the secreted. In terms of biological role, kappa-casein stabilizes micelle formation, preventing casein precipitation in milk. This is Kappa-casein (CSN3) from Equus grevyi (Grevy's zebra).